A 99-amino-acid chain; its full sequence is Small integral membrane protein 9 (99 aa).

The signal sequence occupies residues 1–26 (MEPQKLLIIGFLLCSLTCLLLETVAS). Residues 27 to 73 (SPLPLSALGIQEKTGSKPRSGGNHRSWLNNFRDYLWQLIKSALPPAA) are Extracellular-facing. The chain crosses the membrane as a helical span at residues 74-94 (IVAFLLTSALMGILCCFTILV). Over 95-99 (VDPVH) the chain is Cytoplasmic.

Its subcellular location is the cell membrane. The sequence is that of Small integral membrane protein 9 (SMIM9) from Homo sapiens (Human).